We begin with the raw amino-acid sequence, 562 residues long: Dihydroxy-acid dehydratase (562 aa).

Asp80 contributes to the Mg(2+) binding site. Position 121 (Cys121) interacts with [2Fe-2S] cluster. 2 residues coordinate Mg(2+): Asp122 and Lys123. At Lys123 the chain carries N6-carboxylysine. Cys194 contacts [2Fe-2S] cluster. Residue Glu446 participates in Mg(2+) binding. Catalysis depends on Ser472, which acts as the Proton acceptor.

Belongs to the IlvD/Edd family. As to quaternary structure, homodimer. [2Fe-2S] cluster is required as a cofactor. It depends on Mg(2+) as a cofactor.

It carries out the reaction (2R)-2,3-dihydroxy-3-methylbutanoate = 3-methyl-2-oxobutanoate + H2O. The enzyme catalyses (2R,3R)-2,3-dihydroxy-3-methylpentanoate = (S)-3-methyl-2-oxopentanoate + H2O. The protein operates within amino-acid biosynthesis; L-isoleucine biosynthesis; L-isoleucine from 2-oxobutanoate: step 3/4. It functions in the pathway amino-acid biosynthesis; L-valine biosynthesis; L-valine from pyruvate: step 3/4. Functionally, functions in the biosynthesis of branched-chain amino acids. Catalyzes the dehydration of (2R,3R)-2,3-dihydroxy-3-methylpentanoate (2,3-dihydroxy-3-methylvalerate) into 2-oxo-3-methylpentanoate (2-oxo-3-methylvalerate) and of (2R)-2,3-dihydroxy-3-methylbutanoate (2,3-dihydroxyisovalerate) into 2-oxo-3-methylbutanoate (2-oxoisovalerate), the penultimate precursor to L-isoleucine and L-valine, respectively. This chain is Dihydroxy-acid dehydratase, found in Staphylococcus aureus (strain bovine RF122 / ET3-1).